A 100-amino-acid chain; its full sequence is Urease subunit gamma (100 aa).

The protein belongs to the urease gamma subunit family. Heterotrimer of UreA (gamma), UreB (beta) and UreC (alpha) subunits. Three heterotrimers associate to form the active enzyme.

The protein localises to the cytoplasm. The catalysed reaction is urea + 2 H2O + H(+) = hydrogencarbonate + 2 NH4(+). The protein operates within nitrogen metabolism; urea degradation; CO(2) and NH(3) from urea (urease route): step 1/1. The chain is Urease subunit gamma from Dinoroseobacter shibae (strain DSM 16493 / NCIMB 14021 / DFL 12).